The primary structure comprises 494 residues: Guanosine-5'-triphosphate,3'-diphosphate pyrophosphatase (494 aa).

It belongs to the GppA/Ppx family. GppA subfamily.

The catalysed reaction is guanosine 3'-diphosphate 5'-triphosphate + H2O = guanosine 3',5'-bis(diphosphate) + phosphate + H(+). Its pathway is purine metabolism; ppGpp biosynthesis; ppGpp from GTP: step 2/2. Catalyzes the conversion of pppGpp to ppGpp. Guanosine pentaphosphate (pppGpp) is a cytoplasmic signaling molecule which together with ppGpp controls the 'stringent response', an adaptive process that allows bacteria to respond to amino acid starvation, resulting in the coordinated regulation of numerous cellular activities. In Erwinia tasmaniensis (strain DSM 17950 / CFBP 7177 / CIP 109463 / NCPPB 4357 / Et1/99), this protein is Guanosine-5'-triphosphate,3'-diphosphate pyrophosphatase.